The chain runs to 493 residues: Proline--tRNA ligase (493 aa).

It belongs to the class-II aminoacyl-tRNA synthetase family. ProS type 3 subfamily. In terms of assembly, homodimer.

It localises to the cytoplasm. It catalyses the reaction tRNA(Pro) + L-proline + ATP = L-prolyl-tRNA(Pro) + AMP + diphosphate. In terms of biological role, catalyzes the attachment of proline to tRNA(Pro) in a two-step reaction: proline is first activated by ATP to form Pro-AMP and then transferred to the acceptor end of tRNA(Pro). The chain is Proline--tRNA ligase from Porphyromonas gingivalis (strain ATCC 33277 / DSM 20709 / CIP 103683 / JCM 12257 / NCTC 11834 / 2561).